The sequence spans 293 residues: Elongation factor Ts (293 aa).

Residues 80–83 form an involved in Mg(2+) ion dislocation from EF-Tu region; the sequence is TDFV.

The protein belongs to the EF-Ts family.

The protein resides in the cytoplasm. Functionally, associates with the EF-Tu.GDP complex and induces the exchange of GDP to GTP. It remains bound to the aminoacyl-tRNA.EF-Tu.GTP complex up to the GTP hydrolysis stage on the ribosome. This chain is Elongation factor Ts, found in Staphylococcus aureus (strain Newman).